The following is a 415-amino-acid chain: Serine/threonine transporter SstT (415 aa).

9 helical membrane-spanning segments follow: residues Ile-21–Ala-41, Leu-45–Val-65, Ile-83–Val-103, Ala-142–Phe-162, Leu-193–Gly-213, Leu-217–Val-237, Met-299–Ile-319, Val-331–Ile-351, and Phe-358–Leu-378.

The protein belongs to the dicarboxylate/amino acid:cation symporter (DAACS) (TC 2.A.23) family.

It is found in the cell inner membrane. It catalyses the reaction L-serine(in) + Na(+)(in) = L-serine(out) + Na(+)(out). The catalysed reaction is L-threonine(in) + Na(+)(in) = L-threonine(out) + Na(+)(out). Functionally, involved in the import of serine and threonine into the cell, with the concomitant import of sodium (symport system). The protein is Serine/threonine transporter SstT of Pectobacterium carotovorum subsp. carotovorum (strain PC1).